Here is a 647-residue protein sequence, read N- to C-terminus: DNA polymerase subunit gamma-1 (647 aa).

The interval glutamate 116–glycine 147 is disordered. Over residues glutamine 127–glutamate 137 the composition is skewed to acidic residues.

This sequence belongs to the DNA polymerase type-A family. As to quaternary structure, heterotrimer composed of a catalytic subunit and a homodimer of accessory subunits. Interacts with TTC3. It depends on Mg(2+) as a cofactor.

The protein localises to the mitochondrion. Its subcellular location is the mitochondrion matrix. It localises to the mitochondrion nucleoid. The catalysed reaction is DNA(n) + a 2'-deoxyribonucleoside 5'-triphosphate = DNA(n+1) + diphosphate. Functionally, involved in the replication of mitochondrial DNA. Associates with mitochondrial DNA. The polypeptide is DNA polymerase subunit gamma-1 (POLG) (Gallus gallus (Chicken)).